The primary structure comprises 211 residues: Large ribosomal subunit protein uL3 (211 aa).

It belongs to the universal ribosomal protein uL3 family. Part of the 50S ribosomal subunit. Forms a cluster with proteins L14 and L19.

In terms of biological role, one of the primary rRNA binding proteins, it binds directly near the 3'-end of the 23S rRNA, where it nucleates assembly of the 50S subunit. In Akkermansia muciniphila (strain ATCC BAA-835 / DSM 22959 / JCM 33894 / BCRC 81048 / CCUG 64013 / CIP 107961 / Muc), this protein is Large ribosomal subunit protein uL3.